Here is a 320-residue protein sequence, read N- to C-terminus: Undecaprenyl-diphosphatase (320 aa).

8 helical membrane-spanning segments follow: residues 9–29 (FVLV…LEVF), 82–102 (GVAF…WYFW), 130–150 (LGII…KKLI), 161–181 (LGAI…GEKL), 191–211 (LTMQ…IPGV), 236–256 (FLLG…DVFA), 265–285 (LPLI…IAGL), and 296–316 (VFIW…SAGI).

The protein belongs to the UppP family.

It is found in the cell inner membrane. The catalysed reaction is di-trans,octa-cis-undecaprenyl diphosphate + H2O = di-trans,octa-cis-undecaprenyl phosphate + phosphate + H(+). Its function is as follows. Catalyzes the dephosphorylation of undecaprenyl diphosphate (UPP). Confers resistance to bacitracin. This is Undecaprenyl-diphosphatase from Trichormus variabilis (strain ATCC 29413 / PCC 7937) (Anabaena variabilis).